Consider the following 696-residue polypeptide: Protein OS-9 homolog (696 aa).

The first 15 residues, 1–15 (MLVVAFASLLGAARA), serve as a signal peptide directing secretion. N-linked (GlcNAc...) asparagine glycosylation is found at asparagine 35, asparagine 46, and asparagine 68. In terms of domain architecture, MRH spans 106–224 (NQCLVSQNGF…QVIVPDLCQL (119 aa)). Residues cysteine 108 and cysteine 121 are joined by a disulfide bond. Residues tryptophan 116, glutamine 128, aspartate 178, arginine 184, glutamate 206, and tyrosine 212 each contribute to the a mannooligosaccharide derivative site. Disulfide bonds link cysteine 177-cysteine 210 and cysteine 192-cysteine 222. Asparagine 276, asparagine 290, and asparagine 372 each carry an N-linked (GlcNAc...) asparagine glycan. Disordered stretches follow at residues 450 to 600 (IEAS…DNSD) and 667 to 696 (TLGNNDGVASDVKDEEVVESDRNGVIDDEL). The segment covering 458–467 (TKASESTPVS) has biased composition (polar residues). Residues 482–498 (RSRDKEEYFKENEKQGE) are compositionally biased toward basic and acidic residues. Polar residues-rich tracts occupy residues 499–518 (ENNAQVPFSAHNNEQHGTIS), 528–553 (NQKQLANTQKGDTDTPPQSSQSSAND), and 585–597 (NIDNSSGRSTLND). Asparagine 588 carries an N-linked (GlcNAc...) asparagine glycan. Residues 685–696 (ESDRNGVIDDEL) are compositionally biased toward basic and acidic residues.

Belongs to the OS-9 family. Interacts with missfolded ER lumenal proteins.

The protein resides in the endoplasmic reticulum membrane. Lectin involved in the quality control of the secretory pathway. As a member of the endoplasmic reticulum-associated degradation lumenal (ERAD-L) surveillance system, targets misfolded endoplasmic reticulum lumenal glycoproteins for degradation. The polypeptide is Protein OS-9 homolog (YOS9) (Candida glabrata (strain ATCC 2001 / BCRC 20586 / JCM 3761 / NBRC 0622 / NRRL Y-65 / CBS 138) (Yeast)).